The sequence spans 242 residues: Small ribosomal subunit protein uS2 (242 aa).

This sequence belongs to the universal ribosomal protein uS2 family.

In Shouchella clausii (strain KSM-K16) (Alkalihalobacillus clausii), this protein is Small ribosomal subunit protein uS2.